A 155-amino-acid polypeptide reads, in one-letter code: 6,7-dimethyl-8-ribityllumazine synthase (155 aa).

5-amino-6-(D-ribitylamino)uracil contacts are provided by residues Phe23, 57–59 (AFE), and 81–83 (AVI). Position 86 to 87 (86 to 87 (ST)) interacts with (2S)-2-hydroxy-3-oxobutyl phosphate. His89 (proton donor) is an active-site residue. 5-amino-6-(D-ribitylamino)uracil is bound at residue Phe114. Arg128 contacts (2S)-2-hydroxy-3-oxobutyl phosphate.

Belongs to the DMRL synthase family.

The catalysed reaction is (2S)-2-hydroxy-3-oxobutyl phosphate + 5-amino-6-(D-ribitylamino)uracil = 6,7-dimethyl-8-(1-D-ribityl)lumazine + phosphate + 2 H2O + H(+). Its pathway is cofactor biosynthesis; riboflavin biosynthesis; riboflavin from 2-hydroxy-3-oxobutyl phosphate and 5-amino-6-(D-ribitylamino)uracil: step 1/2. In terms of biological role, catalyzes the formation of 6,7-dimethyl-8-ribityllumazine by condensation of 5-amino-6-(D-ribitylamino)uracil with 3,4-dihydroxy-2-butanone 4-phosphate. This is the penultimate step in the biosynthesis of riboflavin. This is 6,7-dimethyl-8-ribityllumazine synthase from Desulfatibacillum aliphaticivorans.